Here is a 1174-residue protein sequence, read N- to C-terminus: Ankyrin repeat and LEM domain-containing protein 2 homolog (1174 aa).

4 stretches are compositionally biased toward low complexity: residues 37–56 (NPASGSASVASGSPSGSAAS), 150–164 (SSPTSTDNSCSSSPT), 174–198 (LGSNSSMSNLLLSDSPTSSPSSSSN), and 205–219 (QQQMQQQQQQQPQQP). Disordered stretches follow at residues 37–74 (NPASGSASVASGSPSGSAASVQTGNADDGSAATKYEDP) and 141–230 (PIIS…PFRA). One copy of the ANK repeat lies at 338–367 (RGETPLHFAAKNGHVAMVEVLVSYPECKSL). Disordered regions lie at residues 519–543 (AEATSSPKPTKNVPNGTNECEHNNN) and 961–981 (GSSSEDEENFRTPPQSLSPGI). A compositionally biased stretch (polar residues) spans 521-532 (ATSSPKPTKNVP). The segment covering 533–543 (NGTNECEHNNN) has biased composition (low complexity).

The protein belongs to the ANKLE2 family.

The protein localises to the endoplasmic reticulum. It is found in the nucleus envelope. Its subcellular location is the cytoplasm. Involved in brain development probably by regulating asymmetric division of neuroblasts. Regulates neuroblast asymmetric cell division by controlling asymmetric protein localization of Mira, Baz, Par-6 and aPKC, and spindle alignment. Also, regulates the localization of kinase Ball during mitosis, specifically maintaining Ball in the nucleus during interphase. Required for proper ER and nuclear envelope morphology in neuroblasts. The polypeptide is Ankyrin repeat and LEM domain-containing protein 2 homolog (Drosophila melanogaster (Fruit fly)).